The chain runs to 327 residues: Phenylalanine--tRNA ligase alpha subunit (327 aa).

Residue Glu252 participates in Mg(2+) binding.

It belongs to the class-II aminoacyl-tRNA synthetase family. Phe-tRNA synthetase alpha subunit type 1 subfamily. Tetramer of two alpha and two beta subunits. The cofactor is Mg(2+).

The protein localises to the cytoplasm. It carries out the reaction tRNA(Phe) + L-phenylalanine + ATP = L-phenylalanyl-tRNA(Phe) + AMP + diphosphate + H(+). This Aeromonas salmonicida (strain A449) protein is Phenylalanine--tRNA ligase alpha subunit.